The following is a 305-amino-acid chain: Coenzyme PQQ synthesis protein B (305 aa).

Belongs to the PqqB family.

It participates in cofactor biosynthesis; pyrroloquinoline quinone biosynthesis. Functionally, may be involved in the transport of PQQ or its precursor to the periplasm. The protein is Coenzyme PQQ synthesis protein B of Methylobacillus flagellatus (strain ATCC 51484 / DSM 6875 / VKM B-1610 / KT).